We begin with the raw amino-acid sequence, 92 residues long: Large ribosomal subunit protein bL25 (92 aa).

Belongs to the bacterial ribosomal protein bL25 family. Part of the 50S ribosomal subunit; part of the 5S rRNA/L5/L18/L25 subcomplex. Contacts the 5S rRNA. Binds to the 5S rRNA independently of L5 and L18.

This is one of the proteins that binds to the 5S RNA in the ribosome where it forms part of the central protuberance. The sequence is that of Large ribosomal subunit protein bL25 from Vibrio parahaemolyticus serotype O3:K6 (strain RIMD 2210633).